The following is a 471-amino-acid chain: ATP synthase subunit beta (471 aa).

153-160 (GGAGVGKT) serves as a coordination point for ATP.

It belongs to the ATPase alpha/beta chains family. F-type ATPases have 2 components, CF(1) - the catalytic core - and CF(0) - the membrane proton channel. CF(1) has five subunits: alpha(3), beta(3), gamma(1), delta(1), epsilon(1). CF(0) has three main subunits: a(1), b(2) and c(9-12). The alpha and beta chains form an alternating ring which encloses part of the gamma chain. CF(1) is attached to CF(0) by a central stalk formed by the gamma and epsilon chains, while a peripheral stalk is formed by the delta and b chains.

The protein resides in the cell inner membrane. The catalysed reaction is ATP + H2O + 4 H(+)(in) = ADP + phosphate + 5 H(+)(out). Functionally, produces ATP from ADP in the presence of a proton gradient across the membrane. The catalytic sites are hosted primarily by the beta subunits. This Verminephrobacter eiseniae (strain EF01-2) protein is ATP synthase subunit beta.